The chain runs to 102 residues: Omega-hexatoxin-Hi2b (102 aa).

Residues 1–23 form the signal peptide; it reads MKFSKLSLTLALILTQAIFVLCG. A propeptide spanning residues 24–56 is cleaved from the precursor; the sequence is KINEDFMENGLESHALHDEIRKPIDTEKADAER. 3 disulfide bridges follow: cysteine 61–cysteine 75, cysteine 68–cysteine 81, and cysteine 74–cysteine 86. Leucine 98 is modified (leucine amide). Residues 100–102 constitute a propeptide that is removed on maturation; that stretch reads RAL.

The protein belongs to the neurotoxin 15 family. 02 (omega-actx) subfamily. In terms of tissue distribution, expressed by the venom gland.

It localises to the secreted. Potent inhibitor of insect, but not mammalian, voltage-gated calcium channels (Cav). This chain is Omega-hexatoxin-Hi2b, found in Hadronyche infensa (Fraser island funnel-web spider).